The sequence spans 428 residues: Flotillin-1 (428 aa).

Phosphoserine occurs at positions 19, 163, and 385. Position 387 is a phosphothreonine (T387).

The protein belongs to the band 7/mec-2 family. Flotillin subfamily. In terms of assembly, heterooligomeric complex of flotillin-1 and flotillin-2 and caveolin-1 and caveolin-2. Interacts with ECPAS. High expression in brain, white adipose tissue, heart muscle, skeletal muscle and lung. Low expression in spleen, liver and testis.

The protein localises to the cell membrane. It is found in the endosome. It localises to the membrane. Its subcellular location is the caveola. The protein resides in the melanosome. The protein localises to the membrane raft. May act as a scaffolding protein within caveolar membranes, functionally participating in formation of caveolae or caveolae-like vesicles. The polypeptide is Flotillin-1 (Flot1) (Mus musculus (Mouse)).